A 134-amino-acid chain; its full sequence is Lymphocyte antigen 6I (134 aa).

Residues 1-21 (MDTSHAIKSCVLILLVTLLCA) form the signal peptide. The 79-residue stretch at 27-105 (LECYQCYGVP…ISCCQEDLCN (79 aa)) folds into the UPAR/Ly6 domain. Cystine bridges form between C29–C53, C32–C41, C46–C74, C78–C98, and C99–C104. A glycan (N-linked (GlcNAc...) asparagine) is linked at N95. G112 carries the GPI-anchor amidated glycine lipid modification. A propeptide spans 113–134 (SSWTTAGVLLFSLGSVLLQTLM) (removed in mature form).

As to expression, expressed in hematopoietic tissue (spleen, thymus, bone marrow). Also found in peritoneal macrophages, peripheral blood leukocytes, liver, heart, brain, kidney and lung.

It is found in the cell membrane. In Mus musculus (Mouse), this protein is Lymphocyte antigen 6I (Ly6i).